The chain runs to 347 residues: GMP reductase (347 aa).

108 to 131 (ADFEKTKQILAQSPALNFVCIDVA) is a binding site for NADP(+). Positions 181 and 183 each coordinate K(+). The active-site Thioimidate intermediate is cysteine 186. Residue 216-239 (IVSDGGCTMPGDVAKAFGGGADFV) coordinates NADP(+).

Belongs to the IMPDH/GMPR family. GuaC type 1 subfamily. As to quaternary structure, homotetramer.

It carries out the reaction IMP + NH4(+) + NADP(+) = GMP + NADPH + 2 H(+). Catalyzes the irreversible NADPH-dependent deamination of GMP to IMP. It functions in the conversion of nucleobase, nucleoside and nucleotide derivatives of G to A nucleotides, and in maintaining the intracellular balance of A and G nucleotides. This chain is GMP reductase, found in Citrobacter koseri (strain ATCC BAA-895 / CDC 4225-83 / SGSC4696).